A 242-amino-acid polypeptide reads, in one-letter code: MAGHSKWANIKHKKAAADAKRGKIWTRLIKEIQVAARLGGGDVSSNPRLRLAVDKAADANMPKDNVKRAIDRGVGGADGANYEEIRYEGYGIGGAAIIVDTLTDNRTRTVAEVRHAFSKFGGNMGTDGSVAFMFDHVGQFLFAPGTSEDALMEAALEAGADDVSTNEDGSIEVLCDWQEFSKVKDALEAAGFKAELAEVTMKPQNEVEFTGDDAVKMQKLLDALENLDDVQEVYTNAVIVEE.

Belongs to the TACO1 family.

The protein resides in the cytoplasm. This chain is Probable transcriptional regulatory protein Bmul_0984/BMULJ_02280, found in Burkholderia multivorans (strain ATCC 17616 / 249).